A 215-amino-acid polypeptide reads, in one-letter code: Cytochrome b6 (215 aa).

A helical membrane pass occupies residues 32–52 (IFHCLGGITLTCFLVQVATGF). Cys-35 contributes to the heme c binding site. His-86 and His-100 together coordinate heme b. A run of 3 helical transmembrane segments spans residues 90–110 (ASMMVLMMILHVFRVYLTGGF), 116–136 (LTWVTGVVLAVLTASFGVTGY), and 186–206 (LHTFVLPLLTAVFMLMHFPMI). Positions 187 and 202 each coordinate heme b.

It belongs to the cytochrome b family. PetB subfamily. As to quaternary structure, the 4 large subunits of the cytochrome b6-f complex are cytochrome b6, subunit IV (17 kDa polypeptide, PetD), cytochrome f and the Rieske protein, while the 4 small subunits are PetG, PetL, PetM and PetN. The complex functions as a dimer. Heme b is required as a cofactor. The cofactor is heme c.

It is found in the plastid. Its subcellular location is the chloroplast thylakoid membrane. Component of the cytochrome b6-f complex, which mediates electron transfer between photosystem II (PSII) and photosystem I (PSI), cyclic electron flow around PSI, and state transitions. The protein is Cytochrome b6 of Amborella trichopoda.